Reading from the N-terminus, the 498-residue chain is Angiopoietin-1 (498 aa).

A signal peptide spans 1-15; it reads MTVFLSFAFLAAILT. Residues 81 to 119 adopt a coiled-coil conformation; that stretch reads QKLQHLEHVMENYTQWLQKLENYIVENMKSEMAQIQQNA. N-linked (GlcNAc...) asparagine glycans are attached at residues asparagine 92, asparagine 122, asparagine 154, asparagine 243, and asparagine 295. The stretch at 153-261 forms a coiled coil; that stretch reads LNQTSRLEIQ…LELMDTVHNL (109 aa). The Fibrinogen C-terminal domain maps to 277–497; that stretch reads REEEKPFRDC…STTMMIRPLD (221 aa). Disulfide bonds link cysteine 286/cysteine 315 and cysteine 439/cysteine 452.

As to quaternary structure, homooligomer. Interacts with TEK/TIE2. Interacts with SVEP1/polydom. Interacts with THBD; this interaction significantly inhibits the generation of activated PC and TAFIa/CPB2 by the thrombin/thrombomodulin complex. In terms of processing, glycosylated.

It is found in the secreted. Binds and activates TEK/TIE2 receptor by inducing its dimerization and tyrosine phosphorylation. Plays an important role in the regulation of angiogenesis, endothelial cell survival, proliferation, migration, adhesion and cell spreading, reorganization of the actin cytoskeleton, but also maintenance of vascular quiescence. Required for normal angiogenesis and heart development during embryogenesis. After birth, activates or inhibits angiogenesis, depending on the context. Inhibits angiogenesis and promotes vascular stability in quiescent vessels, where endothelial cells have tight contacts. In quiescent vessels, ANGPT1 oligomers recruit TEK to cell-cell contacts, forming complexes with TEK molecules from adjoining cells, and this leads to preferential activation of phosphatidylinositol 3-kinase and the AKT1 signaling cascades. In migrating endothelial cells that lack cell-cell adhesions, ANGT1 recruits TEK to contacts with the extracellular matrix, leading to the formation of focal adhesion complexes, activation of PTK2/FAK and of the downstream kinases MAPK1/ERK2 and MAPK3/ERK1, and ultimately to the stimulation of sprouting angiogenesis. Mediates blood vessel maturation/stability. Implicated in endothelial developmental processes later and distinct from that of VEGF. Appears to play a crucial role in mediating reciprocal interactions between the endothelium and surrounding matrix and mesenchyme. This chain is Angiopoietin-1 (ANGPT1), found in Homo sapiens (Human).